Here is a 385-residue protein sequence, read N- to C-terminus: Chaperone protein DnaJ (385 aa).

The J domain maps to 5 to 70 (DYYEILEITR…SKRQIYDKYG (66 aa)). The segment at 136–213 (GCKKEIHNSF…CKGSGFEISE (78 aa)) adopts a CR-type zinc-finger fold. Cys-149, Cys-152, Cys-165, Cys-168, Cys-187, Cys-190, Cys-201, and Cys-204 together coordinate Zn(2+). CXXCXGXG motif repeat units lie at residues 149-156 (CSDCKGTG), 165-172 (CKDCGGKG), 187-194 (CPTCKGEG), and 201-208 (CSKCKGSG).

The protein belongs to the DnaJ family. As to quaternary structure, homodimer. Zn(2+) serves as cofactor.

Its subcellular location is the cytoplasm. Participates actively in the response to hyperosmotic and heat shock by preventing the aggregation of stress-denatured proteins and by disaggregating proteins, also in an autonomous, DnaK-independent fashion. Unfolded proteins bind initially to DnaJ; upon interaction with the DnaJ-bound protein, DnaK hydrolyzes its bound ATP, resulting in the formation of a stable complex. GrpE releases ADP from DnaK; ATP binding to DnaK triggers the release of the substrate protein, thus completing the reaction cycle. Several rounds of ATP-dependent interactions between DnaJ, DnaK and GrpE are required for fully efficient folding. Also involved, together with DnaK and GrpE, in the DNA replication of plasmids through activation of initiation proteins. The chain is Chaperone protein DnaJ from Helicobacter hepaticus (strain ATCC 51449 / 3B1).